Here is a 277-residue protein sequence, read N- to C-terminus: MKFGIVARRDKEEALKLAYRVYDFLKVSGYDVVVDKDTYEHFPYFNERDVIPLEEFDVDFIIAIGGDGTILRIEHMTKKDIPILSVNMGTLGFLTEVEPSDTFFALSRLIEGEYYIDERIKVRTYINGENRVPDALNEVAILTGIPGKIIHLKYYVDGGLADEVRADGLVVSTPTGSTGYAMSAGGPFVDPRLDVILVVPLLPLPKTSVPMVIPGSSRVDITLVSDREIILAIDGQYYEYLPPDVEITVVKSPRKTKFVRFTKEIYPKYTMKIKERH.

The active-site Proton acceptor is aspartate 67. NAD(+)-binding positions include 67–68 (DG), arginine 72, 137–138 (NE), lysine 148, arginine 165, aspartate 167, 178–183 (TGYAMS), leucine 202, and glutamine 236.

It belongs to the NAD kinase family. It depends on a divalent metal cation as a cofactor.

It localises to the cytoplasm. The enzyme catalyses NAD(+) + ATP = ADP + NADP(+) + H(+). Involved in the regulation of the intracellular balance of NAD and NADP, and is a key enzyme in the biosynthesis of NADP. Catalyzes specifically the phosphorylation on 2'-hydroxyl of the adenosine moiety of NAD to yield NADP. In Pyrococcus furiosus (strain ATCC 43587 / DSM 3638 / JCM 8422 / Vc1), this protein is NAD kinase.